Reading from the N-terminus, the 93-residue chain is MSNVCIIAWVYGRVQGVGFHYTTQHEAQRLGLTGYAKNMDDGSVEVVACGDAAQVEKLIKWLKEGGPRSARVDKILTEPHSPRETLTGFSIRY.

Residues cysteine 5 and cysteine 49 are joined by a disulfide bond. The 89-residue stretch at 5–93 (CIIAWVYGRV…ETLTGFSIRY (89 aa)) folds into the Acylphosphatase-like domain. Asparagine 38 is a catalytic residue.

Belongs to the acylphosphatase family.

The enzyme catalyses an acyl phosphate + H2O = a carboxylate + phosphate + H(+). This is Acylphosphatase from Salmonella paratyphi A (strain ATCC 9150 / SARB42).